Here is a 307-residue protein sequence, read N- to C-terminus: Aspartate carbamoyltransferase catalytic subunit (307 aa).

Positions 56 and 57 each coordinate carbamoyl phosphate. Lys84 is an L-aspartate binding site. Carbamoyl phosphate-binding residues include Arg106, His136, and Gln139. Residues Arg169 and Arg221 each coordinate L-aspartate. 2 residues coordinate carbamoyl phosphate: Ala262 and Pro263.

Belongs to the aspartate/ornithine carbamoyltransferase superfamily. ATCase family. As to quaternary structure, heterododecamer (2C3:3R2) of six catalytic PyrB chains organized as two trimers (C3), and six regulatory PyrI chains organized as three dimers (R2).

The catalysed reaction is carbamoyl phosphate + L-aspartate = N-carbamoyl-L-aspartate + phosphate + H(+). The protein operates within pyrimidine metabolism; UMP biosynthesis via de novo pathway; (S)-dihydroorotate from bicarbonate: step 2/3. Its function is as follows. Catalyzes the condensation of carbamoyl phosphate and aspartate to form carbamoyl aspartate and inorganic phosphate, the committed step in the de novo pyrimidine nucleotide biosynthesis pathway. In Streptococcus pneumoniae (strain P1031), this protein is Aspartate carbamoyltransferase catalytic subunit.